Consider the following 853-residue polypeptide: DNA mismatch repair protein MutS (853 aa).

G613–S620 is a binding site for ATP.

The protein belongs to the DNA mismatch repair MutS family.

Its function is as follows. This protein is involved in the repair of mismatches in DNA. It is possible that it carries out the mismatch recognition step. This protein has a weak ATPase activity. The chain is DNA mismatch repair protein MutS from Vibrio parahaemolyticus serotype O3:K6 (strain RIMD 2210633).